Consider the following 466-residue polypeptide: Ribulose bisphosphate carboxylase large chain (466 aa).

The residue at position 5 (Lys5) is an N6,N6,N6-trimethyllysine. Positions 114 and 164 each coordinate substrate. Lys166 functions as the Proton acceptor in the catalytic mechanism. Residue Lys168 coordinates substrate. Mg(2+)-binding residues include Lys192, Asp194, and Glu195. An N6-carboxylysine modification is found at Lys192. The active-site Proton acceptor is the His285. 3 residues coordinate substrate: Arg286, His318, and Ser370.

This sequence belongs to the RuBisCO large chain family. Type I subfamily. In terms of assembly, heterohexadecamer of 8 large chains and 8 small chains; disulfide-linked. The disulfide link is formed within the large subunit homodimers. Requires Mg(2+) as cofactor. The disulfide bond which can form in the large chain dimeric partners within the hexadecamer appears to be associated with oxidative stress and protein turnover.

The protein resides in the plastid. Its subcellular location is the chloroplast. The enzyme catalyses 2 (2R)-3-phosphoglycerate + 2 H(+) = D-ribulose 1,5-bisphosphate + CO2 + H2O. It catalyses the reaction D-ribulose 1,5-bisphosphate + O2 = 2-phosphoglycolate + (2R)-3-phosphoglycerate + 2 H(+). Its function is as follows. RuBisCO catalyzes two reactions: the carboxylation of D-ribulose 1,5-bisphosphate, the primary event in carbon dioxide fixation, as well as the oxidative fragmentation of the pentose substrate in the photorespiration process. Both reactions occur simultaneously and in competition at the same active site. This chain is Ribulose bisphosphate carboxylase large chain, found in Drosera filiformis (Thread-leaved sundew).